Consider the following 806-residue polypeptide: Leucine--tRNA ligase (806 aa).

The 'HIGH' region motif lies at 40–51; sequence PYPSGAGLHVGH. The 'KMSKS' region motif lies at 578–582; that stretch reads KMSKS. Lys-581 is an ATP binding site.

Belongs to the class-I aminoacyl-tRNA synthetase family.

It localises to the cytoplasm. The catalysed reaction is tRNA(Leu) + L-leucine + ATP = L-leucyl-tRNA(Leu) + AMP + diphosphate. This is Leucine--tRNA ligase from Staphylococcus aureus (strain MSSA476).